The sequence spans 378 residues: Chaperone protein DnaJ (378 aa).

Positions Asp-5 to Gly-70 constitute a J domain. The CR-type zinc finger occupies Gly-134–Thr-212. Residues Cys-147, Cys-150, Cys-164, Cys-167, Cys-186, Cys-189, Cys-200, and Cys-203 each contribute to the Zn(2+) site. 4 CXXCXGXG motif repeats span residues Cys-147–Gly-154, Cys-164–Gly-171, Cys-186–Gly-193, and Cys-200–Gly-207.

This sequence belongs to the DnaJ family. Homodimer. Zn(2+) is required as a cofactor.

The protein resides in the cytoplasm. In terms of biological role, participates actively in the response to hyperosmotic and heat shock by preventing the aggregation of stress-denatured proteins and by disaggregating proteins, also in an autonomous, DnaK-independent fashion. Unfolded proteins bind initially to DnaJ; upon interaction with the DnaJ-bound protein, DnaK hydrolyzes its bound ATP, resulting in the formation of a stable complex. GrpE releases ADP from DnaK; ATP binding to DnaK triggers the release of the substrate protein, thus completing the reaction cycle. Several rounds of ATP-dependent interactions between DnaJ, DnaK and GrpE are required for fully efficient folding. Also involved, together with DnaK and GrpE, in the DNA replication of plasmids through activation of initiation proteins. This chain is Chaperone protein DnaJ, found in Colwellia psychrerythraea (strain 34H / ATCC BAA-681) (Vibrio psychroerythus).